The sequence spans 244 residues: 5-oxoprolinase subunit A (244 aa).

It belongs to the LamB/PxpA family. Forms a complex composed of PxpA, PxpB and PxpC.

The catalysed reaction is 5-oxo-L-proline + ATP + 2 H2O = L-glutamate + ADP + phosphate + H(+). Functionally, catalyzes the cleavage of 5-oxoproline to form L-glutamate coupled to the hydrolysis of ATP to ADP and inorganic phosphate. The protein is 5-oxoprolinase subunit A of Escherichia coli (strain SE11).